A 543-amino-acid chain; its full sequence is Thiamine transport system permease protein ThiP (543 aa).

The next 12 helical transmembrane spans lie at 19-39 (VAGGLALAFLATLAGGALLAL), 64-84 (FTIWQAVASSLRSVLFAIPIA), 102-122 (LFALPLALPALVAVLGVTSIY), 142-162 (DIYGIAGILIAHIFFNMPLAV), 205-225 (GMIGLVFMLCVTSFTTVLTLG), 250-270 (AVALTFTQLALTLLILLILRL), 300-320 (IIVITLGFLYVALPIAGVVVS), 343-363 (LALGFSAALLAVFLSLALVAA), 379-399 (GASLILVMPPIVIGAGWFILL), 406-426 (FVMAPLMVVTVNAAMAMPFAV), 468-488 (GMAFAFAMALSLGDLGTIALF), and 510-530 (FDAAGLALILGVLCLALMMIA). An ABC transmembrane type-1 1 domain is found at 62–266 (ARFTIWQAVA…QLALTLLILL (205 aa)). Residues 339–530 (IATSLALGFS…VLCLALMMIA (192 aa)) enclose the ABC transmembrane type-1 2 domain.

Belongs to the binding-protein-dependent transport system permease family. CysTW subfamily. The complex is composed of two ATP-binding proteins (ThiQ), two transmembrane proteins (ThiP) and a solute-binding protein (ThiB).

The protein resides in the cell inner membrane. Functionally, part of the ABC transporter complex ThiBPQ involved in thiamine import. Probably responsible for the translocation of the substrate across the membrane. The chain is Thiamine transport system permease protein ThiP (thiP) from Brucella suis biovar 1 (strain 1330).